A 170-amino-acid polypeptide reads, in one-letter code: Small ribosomal subunit protein uS9 (170 aa).

The protein belongs to the universal ribosomal protein uS9 family.

This chain is Small ribosomal subunit protein uS9, found in Rhodococcus opacus (strain B4).